Consider the following 378-residue polypeptide: Beta sliding clamp (378 aa).

The protein belongs to the beta sliding clamp family. As to quaternary structure, forms a ring-shaped head-to-tail homodimer around DNA which binds and tethers DNA polymerases and other proteins to the DNA. The DNA replisome complex has a single clamp-loading complex (3 tau and 1 each of delta, delta', psi and chi subunits) which binds 3 Pol III cores (1 core on the leading strand and 2 on the lagging strand) each with a beta sliding clamp dimer. Additional proteins in the replisome are other copies of gamma, psi and chi, Ssb, DNA helicase and RNA primase.

It is found in the cytoplasm. Confers DNA tethering and processivity to DNA polymerases and other proteins. Acts as a clamp, forming a ring around DNA (a reaction catalyzed by the clamp-loading complex) which diffuses in an ATP-independent manner freely and bidirectionally along dsDNA. Initially characterized for its ability to contact the catalytic subunit of DNA polymerase III (Pol III), a complex, multichain enzyme responsible for most of the replicative synthesis in bacteria; Pol III exhibits 3'-5' exonuclease proofreading activity. The beta chain is required for initiation of replication as well as for processivity of DNA replication. The protein is Beta sliding clamp (dnaN) of Streptococcus pneumoniae serotype 4 (strain ATCC BAA-334 / TIGR4).